The chain runs to 212 residues: MALQQTVEQTVAGLGYDLVEIERSAGGLLRVTIDLPWTAPTSEAVAAGIPEPFVTVEDCEKVTRQLQFALEVDGVDYKRLEVSSPGIDRPLRNEQDFERFVGEVIDITLKAPMGAAAAGQVSATRKKFRGTLERVAGADGAPGWQIVWSDAPEPKPGQKVSKKRAPAKLHALGFVLDELRDARLAPIVDFKGRKAKTQPGFSDIDDGTNVPD.

It belongs to the RimP family.

It is found in the cytoplasm. Functionally, required for maturation of 30S ribosomal subunits. This chain is Ribosome maturation factor RimP, found in Variovorax paradoxus (strain S110).